Here is a 427-residue protein sequence, read N- to C-terminus: Glutamate-1-semialdehyde 2,1-aminomutase (427 aa).

N6-(pyridoxal phosphate)lysine is present on lysine 265.

It belongs to the class-III pyridoxal-phosphate-dependent aminotransferase family. HemL subfamily. In terms of assembly, homodimer. Requires pyridoxal 5'-phosphate as cofactor.

Its subcellular location is the cytoplasm. It carries out the reaction (S)-4-amino-5-oxopentanoate = 5-aminolevulinate. It functions in the pathway porphyrin-containing compound metabolism; protoporphyrin-IX biosynthesis; 5-aminolevulinate from L-glutamyl-tRNA(Glu): step 2/2. This chain is Glutamate-1-semialdehyde 2,1-aminomutase, found in Colwellia psychrerythraea (strain 34H / ATCC BAA-681) (Vibrio psychroerythus).